The sequence spans 158 residues: Auxin-responsive protein IAA31 (158 aa).

Over residues 1-40 (MEVSNSCSSFSSSSVDSTKPSPSESSVNLSLSLTFPSTSP) the composition is skewed to low complexity. Residues 1-49 (MEVSNSCSSFSSSSVDSTKPSPSESSVNLSLSLTFPSTSPQREARQDWP) form a disordered region. The short motif at 29 to 33 (LSLSL) is the EAR-like (transcriptional repression) element. Positions 72–157 (SLFVKVYMEG…RRLKITRPER (86 aa)) constitute a PB1 domain.

It belongs to the Aux/IAA family. Homodimers and heterodimers.

The protein resides in the nucleus. In terms of biological role, aux/IAA proteins are short-lived transcriptional factors that function as repressors of early auxin response genes at low auxin concentrations. Repression is thought to result from the interaction with auxin response factors (ARFs), proteins that bind to the auxin-responsive promoter element (AuxRE). Formation of heterodimers with ARF proteins may alter their ability to modulate early auxin response genes expression. This chain is Auxin-responsive protein IAA31 (IAA31), found in Arabidopsis thaliana (Mouse-ear cress).